The chain runs to 84 residues: MAHKKAGGSTRNGRDSNPKYLGVKRYGGEFVKAGTIIIRQRGTKTHPGVNVGCGKDHTLFALKDGTVKFHTGGALNRKFVSIEE.

The segment at 1–20 is disordered; it reads MAHKKAGGSTRNGRDSNPKY.

It belongs to the bacterial ribosomal protein bL27 family.

In Francisella tularensis subsp. tularensis (strain FSC 198), this protein is Large ribosomal subunit protein bL27.